Reading from the N-terminus, the 1225-residue chain is DNA-directed RNA polymerase subunit beta' (1225 aa).

Positions 60, 62, 75, and 78 each coordinate Zn(2+). Positions 450, 452, and 454 each coordinate Mg(2+). The Zn(2+) site is built by cysteine 818, cysteine 892, cysteine 899, and cysteine 902.

Belongs to the RNA polymerase beta' chain family. In terms of assembly, the RNAP catalytic core consists of 2 alpha, 1 beta, 1 beta' and 1 omega subunit. When a sigma factor is associated with the core the holoenzyme is formed, which can initiate transcription. Mg(2+) is required as a cofactor. It depends on Zn(2+) as a cofactor.

It catalyses the reaction RNA(n) + a ribonucleoside 5'-triphosphate = RNA(n+1) + diphosphate. In terms of biological role, DNA-dependent RNA polymerase catalyzes the transcription of DNA into RNA using the four ribonucleoside triphosphates as substrates. In Streptococcus pneumoniae (strain Hungary19A-6), this protein is DNA-directed RNA polymerase subunit beta'.